Reading from the N-terminus, the 232-residue chain is Octanoyltransferase (232 aa).

The region spanning E44–L219 is the BPL/LPL catalytic domain. Substrate-binding positions include R83–H90, A150–G152, and G163–S165. The Acyl-thioester intermediate role is filled by C181.

It belongs to the LipB family.

Its subcellular location is the cytoplasm. It catalyses the reaction octanoyl-[ACP] + L-lysyl-[protein] = N(6)-octanoyl-L-lysyl-[protein] + holo-[ACP] + H(+). The protein operates within protein modification; protein lipoylation via endogenous pathway; protein N(6)-(lipoyl)lysine from octanoyl-[acyl-carrier-protein]: step 1/2. Functionally, catalyzes the transfer of endogenously produced octanoic acid from octanoyl-acyl-carrier-protein onto the lipoyl domains of lipoate-dependent enzymes. Lipoyl-ACP can also act as a substrate although octanoyl-ACP is likely to be the physiological substrate. The polypeptide is Octanoyltransferase (Xanthomonas campestris pv. campestris (strain 8004)).